The sequence spans 25 residues: HAKDVVFGGEARARMVEGVNILANA.

The protein belongs to the chaperonin (HSP60) family. As to quaternary structure, forms a cylinder of 14 subunits composed of two heptameric rings stacked back-to-back. Interacts with the co-chaperonin GroES.

It localises to the cytoplasm. The enzyme catalyses ATP + H2O + a folded polypeptide = ADP + phosphate + an unfolded polypeptide.. In terms of biological role, together with its co-chaperonin GroES, plays an essential role in assisting protein folding. The GroEL-GroES system forms a nano-cage that allows encapsulation of the non-native substrate proteins and provides a physical environment optimized to promote and accelerate protein folding. The polypeptide is Chaperonin GroEL (Delftia acidovorans (Pseudomonas acidovorans)).